Reading from the N-terminus, the 286-residue chain is Hypersensitive-induced response protein 1 (286 aa).

Glycine 2 carries N-myristoyl glycine lipidation. The stretch at 114-190 forms a coiled coil; it reads LDDVFEQKND…EKILQIKRAE (77 aa).

As to quaternary structure, self-interacts and forms heteromers. Interacts with NB-LRR class of R proteins before R proteins (e.g. RPS2 or RPM1) are activated by the effectors. Interacts with LRR1.

It is found in the cell membrane. Positive regulator of hypersensitive response (HR)-like cell death. May be involved in potassium ion channel regulation. This Arabidopsis thaliana (Mouse-ear cress) protein is Hypersensitive-induced response protein 1.